The following is a 431-amino-acid chain: 3-phosphoshikimate 1-carboxyvinyltransferase (431 aa).

Positions 26, 27, and 31 each coordinate 3-phosphoshikimate. K26 lines the phosphoenolpyruvate pocket. 2 residues coordinate phosphoenolpyruvate: G100 and R129. 3-phosphoshikimate is bound by residues S175, S176, Q177, D308, and Q335. Q177 provides a ligand contact to phosphoenolpyruvate. Catalysis depends on D308, which acts as the Proton acceptor. Phosphoenolpyruvate-binding residues include R339, R381, and K412.

It belongs to the EPSP synthase family. In terms of assembly, monomer.

The protein resides in the cytoplasm. The enzyme catalyses 3-phosphoshikimate + phosphoenolpyruvate = 5-O-(1-carboxyvinyl)-3-phosphoshikimate + phosphate. It participates in metabolic intermediate biosynthesis; chorismate biosynthesis; chorismate from D-erythrose 4-phosphate and phosphoenolpyruvate: step 6/7. Catalyzes the transfer of the enolpyruvyl moiety of phosphoenolpyruvate (PEP) to the 5-hydroxyl of shikimate-3-phosphate (S3P) to produce enolpyruvyl shikimate-3-phosphate and inorganic phosphate. In Opitutus terrae (strain DSM 11246 / JCM 15787 / PB90-1), this protein is 3-phosphoshikimate 1-carboxyvinyltransferase.